Consider the following 159-residue polypeptide: uncharacterized protein (159 aa).

It is found in the mitochondrion. This is an uncharacterized protein from Arabidopsis thaliana (Mouse-ear cress).